We begin with the raw amino-acid sequence, 462 residues long: Myrosinase-binding protein 1 (462 aa).

The interval 1-23 is disordered; sequence MSTGGPQKLEAQGGKEGKEWDDG. Jacalin-type lectin domains are found at residues 6–148, 157–300, and 310–453; these read PQKL…YFAP, PNKV…YFAP, and TKKL…HIVP. Residues 13-23 show a composition bias toward basic and acidic residues; it reads GGKEGKEWDDG.

Belongs to the jacalin lectin family. As to expression, expressed exclusively in flowers, in male and female organs, petals and pedicels. Not detected in pollen grains or sepals.

This Arabidopsis thaliana (Mouse-ear cress) protein is Myrosinase-binding protein 1 (MBP1).